Here is a 231-residue protein sequence, read N- to C-terminus: Probable septum site-determining protein MinC (231 aa).

A disordered region spans residues 102 to 125 (KEKAPRPAPAPQAPAQNTTPVTKT).

The protein belongs to the MinC family. As to quaternary structure, interacts with MinD and FtsZ.

Cell division inhibitor that blocks the formation of polar Z ring septums. Rapidly oscillates between the poles of the cell to destabilize FtsZ filaments that have formed before they mature into polar Z rings. Prevents FtsZ polymerization. The polypeptide is Probable septum site-determining protein MinC (Escherichia coli O139:H28 (strain E24377A / ETEC)).